The following is a 993-amino-acid chain: Chromosome transmission fidelity protein 18 (993 aa).

Disordered stretches follow at residues 1-52 (MPFI…DHDG) and 65-107 (FEIQ…DGLE). 2 stretches are compositionally biased toward acidic residues: residues 42-51 (LDDDDDDDHD) and 97-106 (DNDDDDDDGL). 321-328 (GPPGLGKT) contributes to the ATP binding site. The tract at residues 887-915 (RKNSENLSSTGSKKSTTKSDDIETPANPA) is disordered.

This sequence belongs to the activator 1 small subunits family. CTF18 subfamily.

It localises to the nucleus. Essential for the fidelity of chromosome transmission. Required for the DNA replication block checkpoint. Replication factor C (RFC) complex has an essential but redundant activity in sister chromatid cohesion establishment. In Emericella nidulans (strain FGSC A4 / ATCC 38163 / CBS 112.46 / NRRL 194 / M139) (Aspergillus nidulans), this protein is Chromosome transmission fidelity protein 18 (ctf18).